We begin with the raw amino-acid sequence, 806 residues long: Protein translocase subunit SecA 2 (806 aa).

Residues Q122, 140–144, and D533 each bind ATP; that span reads GEGKT.

The protein belongs to the SecA family. As to quaternary structure, monomer and homodimer. Part of the essential Sec protein translocation apparatus which comprises SecA, SecYEG and auxiliary proteins SecDF. Other proteins may also be involved.

The protein localises to the cell membrane. It is found in the cytoplasm. The enzyme catalyses ATP + H2O + cellular proteinSide 1 = ADP + phosphate + cellular proteinSide 2.. Functionally, part of the Sec protein translocase complex. Interacts with the SecYEG preprotein conducting channel. Has a central role in coupling the hydrolysis of ATP to the transfer of proteins into and across the cell membrane, serving as an ATP-driven molecular motor driving the stepwise translocation of polypeptide chains across the membrane. The polypeptide is Protein translocase subunit SecA 2 (Mycobacterium ulcerans (strain Agy99)).